A 370-amino-acid chain; its full sequence is Sphingosine 1-phosphate receptor 2 (370 aa).

The Extracellular segment spans residues 1–57 (MTTCRLFAGFCQAVTMSKYSQYFNKTLIQVHYLTAKEMTAEELRDRIESKQSLSSLN). Asn24 is a glycosylation site (N-linked (GlcNAc...) asparagine). Residues 58–78 (ILFVVICSIIILENLLVLIAV) traverse the membrane as a helical segment. Residues 79 to 87 (FRNKKFHSA) lie on the Cytoplasmic side of the membrane. The chain crosses the membrane as a helical span at residues 88 to 108 (MFFFIGNLAFSDLLAGSAYIA). Over 109–128 (NIFLSGPRTFHLTPVQWFIR) the chain is Extracellular. Residues 129–149 (EGTAFIALSASVFSLLAIAIE) form a helical membrane-spanning segment. Over 150–167 (RYIAITKVKVYGSNKTCR) the chain is Cytoplasmic. A helical membrane pass occupies residues 168-193 (MFLLIGACWVMSILLGGLPIIGWNCI). Over 194–219 (NNLDDCSAVLPLNTRYYIRFVVTIFS) the chain is Extracellular. A helical membrane pass occupies residues 220 to 230 (IILLSIVILYV). The Cytoplasmic segment spans residues 231-254 (RIYLIVRTSHQEATNSPAYALLKT). Residues 255–275 (VTIVLGVFIICWLPAFTILLL) form a helical membrane-spanning segment. The Extracellular portion of the chain corresponds to 276–289 (DTSCKMKQCPILNN). A helical transmembrane segment spans residues 290 to 310 (AGIFFSFATLNSALNPLIYTL). Over 311-370 (RSKDMRKEFLRVLCCWGLLNCGRPPHRCMVPLKSSSSMEHCTNKHEHQSIPIMQDCTTCV) the chain is Cytoplasmic. Residue Cys325 is the site of S-palmitoyl cysteine attachment.

The protein belongs to the G-protein coupled receptor 1 family.

It localises to the cell membrane. In terms of biological role, receptor for the lysosphingolipid sphingosine 1-phosphate (S1P). S1P receptor is critical for cell migration and epithelial integrity during vertebrate embryogenesis. Receptor for the chemokine-like protein FAM19A5. Mediates the inhibitory effect of FAM19A5 on vascular smooth muscle cell proliferation and migration. This Danio rerio (Zebrafish) protein is Sphingosine 1-phosphate receptor 2 (s1pr2).